A 93-amino-acid chain; its full sequence is YcgL domain-containing protein VV1058 (93 aa).

Positions 1-84 (MLCSIYKSSK…PPENLLQQHK (84 aa)) constitute a YcgL domain. The tract at residues 74–93 (PPPENLLQQHKERKAQQKND) is disordered.

The chain is YcgL domain-containing protein VV1058 from Vibrio vulnificus (strain YJ016).